We begin with the raw amino-acid sequence, 250 residues long: L-ascorbate peroxidase, cytosolic (250 aa).

Residue His-42 is the Proton acceptor of the active site. The disordered stretch occupies residues Val-113 to Gly-137. Positions Pro-117–Gly-137 are enriched in basic and acidic residues. His-163 contacts heme b. Thr-164, Thr-180, Asn-182, Ile-185, and Asp-187 together coordinate K(+).

Belongs to the peroxidase family. Ascorbate peroxidase subfamily. Requires heme b as cofactor.

Its subcellular location is the cytoplasm. The enzyme catalyses L-ascorbate + H2O2 = L-dehydroascorbate + 2 H2O. Functionally, plays a key role in hydrogen peroxide removal. The chain is L-ascorbate peroxidase, cytosolic (APX1) from Pisum sativum (Garden pea).